The following is a 1036-amino-acid chain: Mitogen-activated protein kinase kinase kinase 21 (1036 aa).

The tract at residues 1–36 (MALRGAAGATDTPVSSAGGAPGGSASSSSTSSGGSA) is disordered. Over residues 15 to 36 (SSAGGAPGGSASSSSTSSGGSA) the composition is skewed to low complexity. Residues 38 to 102 (AGAGLWAALY…PANYVAPCRP (65 aa)) enclose the SH3 domain. Residues 124 to 401 (LELKELIGAG…ALILEQLTAI (278 aa)) form the Protein kinase domain. ATP contacts are provided by residues 130-138 (IGAGGFGQV) and lysine 151. Aspartate 263 serves as the catalytic Proton acceptor. Threonine 299 bears the Phosphothreonine; by autocatalysis mark. Serine 303 is subject to Phosphoserine; by autocatalysis and MAP4K1. Leucine-zipper stretches follow at residues 425 to 446 (IQQM…EEEL) and 460 to 481 (LKRR…ELNI). Positions 517 to 551 (SDFQHKITVQASPNLDKRRSLNSSSSSPPSSPTMM) are disordered. 3 positions are modified to phosphoserine: serine 528, serine 543, and serine 547. Threonine 592 carries the post-translational modification Phosphothreonine. Serine 614 carries the phosphoserine modification. Over residues 748-763 (AEEPLPKEEKKKREGI) the composition is skewed to basic and acidic residues. Disordered regions lie at residues 748–791 (AEEP…SSPP) and 923–954 (PHSH…RSRS).

Belongs to the protein kinase superfamily. STE Ser/Thr protein kinase family. MAP kinase kinase kinase subfamily. Homodimer. Interacts with TLR4. The cofactor is Mg(2+). Post-translationally, autophosphorylation on serine and threonine residues within the activation loop plays a role in enzyme activation.

The enzyme catalyses L-seryl-[protein] + ATP = O-phospho-L-seryl-[protein] + ADP + H(+). It catalyses the reaction L-threonyl-[protein] + ATP = O-phospho-L-threonyl-[protein] + ADP + H(+). With respect to regulation, homodimerization via the leucine zipper domains is required for autophosphorylation and subsequent activation. Its function is as follows. Negative regulator of TLR4 signaling. Does not activate JNK1/MAPK8 pathway, p38/MAPK14, nor ERK2/MAPK1 pathways. In Homo sapiens (Human), this protein is Mitogen-activated protein kinase kinase kinase 21.